The chain runs to 281 residues: NADPH-dependent 7-cyano-7-deazaguanine reductase (281 aa).

Substrate is bound at residue 88 to 90; it reads IES. Residue 90–91 participates in NADPH binding; sequence SK. The active-site Thioimide intermediate is the C189. The Proton donor role is filled by D196. Residue 228–229 participates in substrate binding; the sequence is HE. 257-258 lines the NADPH pocket; the sequence is RG.

It belongs to the GTP cyclohydrolase I family. QueF type 2 subfamily. In terms of assembly, homodimer.

It is found in the cytoplasm. It catalyses the reaction 7-aminomethyl-7-carbaguanine + 2 NADP(+) = 7-cyano-7-deazaguanine + 2 NADPH + 3 H(+). It functions in the pathway tRNA modification; tRNA-queuosine biosynthesis. Functionally, catalyzes the NADPH-dependent reduction of 7-cyano-7-deazaguanine (preQ0) to 7-aminomethyl-7-deazaguanine (preQ1). The protein is NADPH-dependent 7-cyano-7-deazaguanine reductase of Yersinia pseudotuberculosis serotype O:1b (strain IP 31758).